A 418-amino-acid polypeptide reads, in one-letter code: L-methionine/branched-chain amino acid exporter YjeH (418 aa).

Topologically, residues 1–15 (MSGLKQELGLAQGIG) are periplasmic. A helical membrane pass occupies residues 16–36 (LLSTSLLGTGVFAVPALAALV). Residues 37 to 41 (AGNNS) lie on the Cytoplasmic side of the membrane. A helical transmembrane segment spans residues 42–62 (LWAWPVLIILVFPIAIVFAIL). The Periplasmic segment spans residues 63–89 (GRHYPSAGGVAHFVGMAFGSRLERVTG). A helical transmembrane segment spans residues 90–110 (WLFLSVIPVGLPAALQIAAGF). Topologically, residues 111 to 113 (GQA) are cytoplasmic. Residues 114–134 (MFGWHSWQLLLAELGTLALVW) traverse the membrane as a helical segment. The Periplasmic portion of the chain corresponds to 135-147 (YIGTRGASSSANL). The chain crosses the membrane as a helical span at residues 148–168 (QTVIAGLIVALIVAIWWAGDI). Residues 169–182 (KPANIPFPAPGNIE) are Cytoplasmic-facing. A helical transmembrane segment spans residues 183-203 (LTGLFAALSVMFWCFVGLEAF). At 204 to 219 (AHLASEFKNPERDFPR) the chain is on the periplasmic side. The helical transmembrane segment at 220–240 (ALMIGLLLAGLVYWGCTVVVL) threads the bilayer. Residues 241-257 (HFDAYGEKMAAAASLPK) lie on the Cytoplasmic side of the membrane. A helical transmembrane segment spans residues 258–278 (IVVQLFGVGALWIACVIGYLA). Over 279–317 (CFASLNIYIQSFARLVWSQAQHNPDHYLARLSSRHIPNN) the chain is Periplasmic. Residues 318-338 (ALNAVLGCCVVSTLVIHALEI) form a helical membrane-spanning segment. Residues 339 to 341 (NLD) lie on the Cytoplasmic side of the membrane. The chain crosses the membrane as a helical span at residues 342–362 (ALIIYANGIFIMIYLLCMLAG). Topologically, residues 363–378 (CKLLQGRYRLLAVVGG) are periplasmic. A helical membrane pass occupies residues 379-399 (LLCVLLLAMVGWKSLYALIML). Over 400 to 418 (AGLWLLLPKRKTPENGITT) the chain is Cytoplasmic.

Belongs to the amino acid-polyamine-organocation (APC) superfamily. Amino acid efflux (AAE) (TC 2.A.3.13) family.

The protein resides in the cell inner membrane. The catalysed reaction is L-methionine(in) + H(+)(out) = L-methionine(out) + H(+)(in). It carries out the reaction L-leucine(in) + H(+)(out) = L-leucine(out) + H(+)(in). It catalyses the reaction L-isoleucine(in) + H(+)(out) = L-isoleucine(out) + H(+)(in). The enzyme catalyses L-valine(in) + H(+)(out) = L-valine(out) + H(+)(in). With respect to regulation, efflux of L-methionine is inhibited by the proton ionophore carbonyl cyanide m-chlorophenylhydrazone (CCCP). Catalyzes the efflux of L-methionine, L-leucine, L-isoleucine and L-valine. Activity is dependent on electrochemical potential. This Escherichia coli (strain K12) protein is L-methionine/branched-chain amino acid exporter YjeH (yjeH).